A 333-amino-acid polypeptide reads, in one-letter code: MAELFYDADADLSIIQGRKVAVIGYGSQGHAHALSLRDSGVDVRVGLHEGSKSKAKAEEQGLRVVTPSEAAAEADVIMILVPDPIQAQVYEESIKDNLKDGDALFFGHGLNIRFGFIKPPAGVDVCMVAPKGPGHLVRRQYEEGRGVPCIAAVEQDATGNGFALALSYAKGIGGTRAGVIKTTFTEETETDLFGEQAVLCGGTAALVKAGFETLTEAGYQPEIAYFECLHELKLIVDLMYEGGLEKMRWSISETAEWGDYVTGPRIITDATKAEMKKVLAEIQDGTFAQAWMDEYHGGLKKYNEYKTQDENHLLETTGKELRKLMSWVNDEEA.

Residues 2-182 (AELFYDADAD…GGTRAGVIKT (181 aa)) enclose the KARI N-terminal Rossmann domain. Residues 25–28 (YGSQ), S51, S53, and 83–86 (DPIQ) contribute to the NADP(+) site. H108 is a catalytic residue. NADP(+) is bound at residue G134. The region spanning 183–328 (TFTEETETDL…KELRKLMSWV (146 aa)) is the KARI C-terminal knotted domain. Mg(2+) contacts are provided by D191, E195, E227, and E231. S252 serves as a coordination point for substrate.

It belongs to the ketol-acid reductoisomerase family. Mg(2+) serves as cofactor.

It catalyses the reaction (2R)-2,3-dihydroxy-3-methylbutanoate + NADP(+) = (2S)-2-acetolactate + NADPH + H(+). The catalysed reaction is (2R,3R)-2,3-dihydroxy-3-methylpentanoate + NADP(+) = (S)-2-ethyl-2-hydroxy-3-oxobutanoate + NADPH + H(+). The protein operates within amino-acid biosynthesis; L-isoleucine biosynthesis; L-isoleucine from 2-oxobutanoate: step 2/4. Its pathway is amino-acid biosynthesis; L-valine biosynthesis; L-valine from pyruvate: step 2/4. In terms of biological role, involved in the biosynthesis of branched-chain amino acids (BCAA). Catalyzes an alkyl-migration followed by a ketol-acid reduction of (S)-2-acetolactate (S2AL) to yield (R)-2,3-dihydroxy-isovalerate. In the isomerase reaction, S2AL is rearranged via a Mg-dependent methyl migration to produce 3-hydroxy-3-methyl-2-ketobutyrate (HMKB). In the reductase reaction, this 2-ketoacid undergoes a metal-dependent reduction by NADPH to yield (R)-2,3-dihydroxy-isovalerate. The sequence is that of Ketol-acid reductoisomerase (NADP(+)) from Streptomyces avermitilis (strain ATCC 31267 / DSM 46492 / JCM 5070 / NBRC 14893 / NCIMB 12804 / NRRL 8165 / MA-4680).